The chain runs to 248 residues: NAD(P)H-quinone oxidoreductase subunit K (248 aa).

4 residues coordinate [4Fe-4S] cluster: C66, C67, C131, and C162.

Belongs to the complex I 20 kDa subunit family. NDH-1 can be composed of about 15 different subunits; different subcomplexes with different compositions have been identified which probably have different functions. Requires [4Fe-4S] cluster as cofactor.

Its subcellular location is the cellular thylakoid membrane. It catalyses the reaction a plastoquinone + NADH + (n+1) H(+)(in) = a plastoquinol + NAD(+) + n H(+)(out). The catalysed reaction is a plastoquinone + NADPH + (n+1) H(+)(in) = a plastoquinol + NADP(+) + n H(+)(out). Functionally, NDH-1 shuttles electrons from an unknown electron donor, via FMN and iron-sulfur (Fe-S) centers, to quinones in the respiratory and/or the photosynthetic chain. The immediate electron acceptor for the enzyme in this species is believed to be plastoquinone. Couples the redox reaction to proton translocation, and thus conserves the redox energy in a proton gradient. Cyanobacterial NDH-1 also plays a role in inorganic carbon-concentration. The protein is NAD(P)H-quinone oxidoreductase subunit K of Synechococcus sp. (strain WH7803).